Reading from the N-terminus, the 417-residue chain is 3-oxo-isoapionate-4-phosphate decarboxylase (417 aa).

Mg(2+) is bound by residues K177, D179, and E180. At K177 the chain carries N6-carboxylysine.

Belongs to the RuBisCO large chain family. Requires Mg(2+) as cofactor.

The catalysed reaction is 3-oxoisoapionate 4-phosphate + H(+) = L-erythrulose 1-phosphate + CO2. Its pathway is carbohydrate metabolism. In terms of biological role, involved in catabolism of D-apiose. Catalyzes the decarboxylation of 3-oxo-isoapionate 4-phosphate to L-erythrulose 1-phosphate. This is 3-oxo-isoapionate-4-phosphate decarboxylase from Rhizobium etli (strain ATCC 51251 / DSM 11541 / JCM 21823 / NBRC 15573 / CFN 42).